A 347-amino-acid chain; its full sequence is Melanoma-associated antigen B1 (347 aa).

Basic residues predominate over residues 1-17; sequence MPRGQKSKLRAREKRRK. Positions 1-104 are disordered; it reads MPRGQKSKLR…QATTSTESSV (104 aa). Polar residues-rich tracts occupy residues 39-53 and 89-102; these read PSSS…TSSP and ENAS…STES. The 200-residue stretch at 108 to 307 folds into the MAGE domain; that stretch reads VAWEAGMLMH…RDFPSHYEEA (200 aa). The interval 315-347 is disordered; the sequence is AQVRSSVRARRRTTATTFRARSRAPFSRSSHPM. A compositionally biased stretch (low complexity) spans 328–347; the sequence is TATTFRARSRAPFSRSSHPM.

As to expression, expressed only in testis.

The sequence is that of Melanoma-associated antigen B1 (MAGEB1) from Homo sapiens (Human).